The primary structure comprises 232 residues: Large ribosomal subunit protein uL1 (232 aa).

This sequence belongs to the universal ribosomal protein uL1 family. In terms of assembly, part of the 50S ribosomal subunit.

Its function is as follows. Binds directly to 23S rRNA. The L1 stalk is quite mobile in the ribosome, and is involved in E site tRNA release. Protein L1 is also a translational repressor protein, it controls the translation of the L11 operon by binding to its mRNA. The chain is Large ribosomal subunit protein uL1 from Variovorax paradoxus (strain S110).